A 437-amino-acid polypeptide reads, in one-letter code: uncharacterized protein (437 aa).

Residues leucine 47–alanine 67 traverse the membrane as a helical segment.

It localises to the membrane. This is an uncharacterized protein from Methanocaldococcus jannaschii (strain ATCC 43067 / DSM 2661 / JAL-1 / JCM 10045 / NBRC 100440) (Methanococcus jannaschii).